The sequence spans 406 residues: uncharacterized protein (406 aa).

This is an uncharacterized protein from Escherichia coli (strain K12).